The sequence spans 131 residues: Protein FAM107B (131 aa).

Position 2 is an N-acetylalanine (A2). Disordered stretches follow at residues 39-78 (MNQK…KKKS) and 100-131 (KLQE…AQES). K50 carries the post-translational modification N6-acetyllysine. Residues 52–78 (ELQKVMEKRKRDQVIKQKEEEAQKKKS) are compositionally biased toward basic and acidic residues. Residues 61 to 112 (KRDQVIKQKEEEAQKKKSDLEIELLKRQQKLEQLELEKQKLQEEQENAPEFV) adopt a coiled-coil conformation.

It belongs to the FAM107 family.

In Homo sapiens (Human), this protein is Protein FAM107B.